A 187-amino-acid polypeptide reads, in one-letter code: Elongation factor P (187 aa).

The protein belongs to the elongation factor P family.

The protein resides in the cytoplasm. Its pathway is protein biosynthesis; polypeptide chain elongation. In terms of biological role, involved in peptide bond synthesis. Stimulates efficient translation and peptide-bond synthesis on native or reconstituted 70S ribosomes in vitro. Probably functions indirectly by altering the affinity of the ribosome for aminoacyl-tRNA, thus increasing their reactivity as acceptors for peptidyl transferase. This chain is Elongation factor P, found in Chromobacterium violaceum (strain ATCC 12472 / DSM 30191 / JCM 1249 / CCUG 213 / NBRC 12614 / NCIMB 9131 / NCTC 9757 / MK).